The primary structure comprises 126 residues: Holo-[acyl-carrier-protein] synthase (126 aa).

Mg(2+)-binding residues include Asp-8 and Glu-57.

Belongs to the P-Pant transferase superfamily. AcpS family. The cofactor is Mg(2+).

Its subcellular location is the cytoplasm. The enzyme catalyses apo-[ACP] + CoA = holo-[ACP] + adenosine 3',5'-bisphosphate + H(+). Functionally, transfers the 4'-phosphopantetheine moiety from coenzyme A to a Ser of acyl-carrier-protein. The sequence is that of Holo-[acyl-carrier-protein] synthase from Geobacter sulfurreducens (strain ATCC 51573 / DSM 12127 / PCA).